We begin with the raw amino-acid sequence, 375 residues long: CD2 homolog (375 aa).

The signal sequence occupies residues 1–16 (MIIILIFLIIPNIVLS). The Extracellular segment spans residues 17-207 (IDYWVSFNKT…YLDFFQVASY (191 aa)). Residues Asn-24, Asn-80, Asn-105, Asn-122, Asn-134, Asn-145, Asn-168, Asn-176, and Asn-183 are each glycosylated (N-linked (GlcNAc...) asparagine; by host). 2 disulfide bridges follow: Cys-123/Cys-190 and Cys-130/Cys-173. A helical transmembrane segment spans residues 208-228 (MFYMIIFIATGIIASIFISII). The Cytoplasmic segment spans residues 229-375 (TFLSLRKRKK…ISLIHVDRII (147 aa)). The disordered stretch occupies residues 242–278 (EIESPSPSESNEEEQCQHDDTTSIHEPSPREPLLPKP). Residues 256–270 (QCQHDDTTSIHEPSP) show a composition bias toward basic and acidic residues. Repeat copies occupy residues 305-310 (KLCPPP), 311-316 (KPCPPP), 317-322 (KPCPPP), 323-328 (KPCPPP), and 329-334 (KPCPSS). Residues 305-334 (KLCPPPKPCPPPKPCPPPKPCPPPKPCPSS) are 5 X 6 AA tandem repeats of K-[LP]-C-[PRS]-[PS]-[PS]. The interval 323–350 (KPCPPPKPCPSSESCSPPESYSLPKPLP) is disordered. Residues 332–346 (PSSESCSPPESYSLP) are compositionally biased toward low complexity.

The protein belongs to the asfivirus CD2 homolog protein family. In terms of assembly, both glycosylated and nonglycosylated forms interact (via C-terminus) with the host AP-1 complex. Post-translationally, cleaved into two fragments of 63 kDa and 26 kDa containing respectively the glycosylated N-terminus and the nonglycosylated C-terminus. A full-length 89-kDa glycosylated form also exists.

It is found in the host membrane. The protein localises to the virion membrane. The protein resides in the host Golgi apparatus. In terms of biological role, may play an immunosuppressive role by inhibiting lymphocyte proliferation and subsequently facilitating viral replication and generalization of infection. Responsible for viral hemadsorption, which may help viral spread. Increases virus replication in the tick vector at the step of virus uptake or replication in the tick gut. May play a role in the host Golgi reorganization to yield viral factories. May play a role in host cell penetration. This Ornithodoros (relapsing fever ticks) protein is CD2 homolog.